Consider the following 205-residue polypeptide: Probable GTP-binding protein EngB (205 aa).

The EngB-type G domain maps to 8-195; it reads RDAEVVLIGR…NEAVRHHLHE (188 aa). GTP contacts are provided by residues 16-23, 41-45, 60-63, 140-143, and 175-177; these read GRSNVGKS, GVTRS, DLPG, NKMD, and ISA. Mg(2+) is bound by residues Ser23 and Thr43.

This sequence belongs to the TRAFAC class TrmE-Era-EngA-EngB-Septin-like GTPase superfamily. EngB GTPase family. It depends on Mg(2+) as a cofactor.

In terms of biological role, necessary for normal cell division and for the maintenance of normal septation. The chain is Probable GTP-binding protein EngB from Haloarcula marismortui (strain ATCC 43049 / DSM 3752 / JCM 8966 / VKM B-1809) (Halobacterium marismortui).